The chain runs to 205 residues: Recombination protein RecR (205 aa).

Residues 58–75 (CSVCQNVTDRDADPCYIC) form a C4-type zinc finger. The region spanning 83–182 (SVICVVESPA…SVTKIARGIP (100 aa)) is the Toprim domain.

The protein belongs to the RecR family.

Its function is as follows. May play a role in DNA repair. It seems to be involved in an RecBC-independent recombinational process of DNA repair. It may act with RecF and RecO. The sequence is that of Recombination protein RecR from Chlorobium limicola (strain DSM 245 / NBRC 103803 / 6330).